The sequence spans 291 residues: Protease HtpX homolog (291 aa).

2 helical membrane-spanning segments follow: residues 11–31 (INTF…GLLA) and 34–54 (FLGM…ACVQ). A Zn(2+)-binding site is contributed by histidine 140. Glutamate 141 is an active-site residue. Histidine 144 is a Zn(2+) binding site. 2 helical membrane-spanning segments follow: residues 155–175 (IVFG…RALI) and 186–206 (AFSF…AMLV). Residue glutamate 215 participates in Zn(2+) binding.

Belongs to the peptidase M48B family. It depends on Zn(2+) as a cofactor.

The protein resides in the cell membrane. This Tropheryma whipplei (strain TW08/27) (Whipple's bacillus) protein is Protease HtpX homolog.